The chain runs to 555 residues: Efflux pump FUS6 (555 aa).

A disordered region spans residues 1–23; sequence MASAKDAQPAPEKSLSSDPQPEP. 5 consecutive transmembrane segments (helical) span residues 31 to 51, 67 to 87, 97 to 117, 130 to 150, and 159 to 179; these read WLIFVAISLTTFLAALDTSII, LYVWIIDAYLLASTATIPIFA, SLTLIAVCIFTLGSGLCGGAH, GIGGGGILTMSEIVVCDMVSI, and IIGGVWAIAAVVAPVMGGAFA. Asparagine 181 is a glycosylation site (N-linked (GlcNAc...) asparagine). 3 helical membrane passes run 186–206, 225–245, and 253–273; these read WIFYINLPIAGVSLVALGLFL, WGGSVLLIGSVTSIVLALSWG, and GWQTIVPLVIGLLALVAFFAY. A glycan (N-linked (GlcNAc...) asparagine) is linked at asparagine 291. 6 consecutive transmembrane segments (helical) span residues 297–317, 332–352, 360–380, 393–413, 425–445, and 501–521; these read LLVISFIHSLLLYWICYFLPV, VMLFPIACTSAPAGVAAGITI, VWHFTGFVLMSIACGLFTLLD, ILFGVGTGTVFTSTLPPILAS, AWTFIRNFGSIWGVAIPAAVF, and KVVWQVSLAFCLLGFILCFFV. A glycan (N-linked (GlcNAc...) asparagine) is linked at asparagine 545.

Belongs to the major facilitator superfamily. TCR/Tet family.

The protein resides in the membrane. In terms of biological role, efflux pump; part of the gene cluster that mediates the biosynthesis of the mycotoxin fusarin C. Within the cluster, FUS1, FUS2, FUS8 and FUS9 are sufficient for fusarin production. The other FUS cluster members are not essential for fusarin C biosynthesis. This chain is Efflux pump FUS6, found in Gibberella fujikuroi (strain CBS 195.34 / IMI 58289 / NRRL A-6831) (Bakanae and foot rot disease fungus).